We begin with the raw amino-acid sequence, 547 residues long: Agglutinin-1 (547 aa).

Residues 1–20 (MKFETTKNKLHGNAYYQAQF) form the signal peptide. Pyrrolidone carboxylic acid is present on Gln21. The active site involves Glu183. Intrachain disulfides connect Cys266–Cys288, Cys305–Cys324, and Cys348–Cys365. The propeptide at 279-280 (RS) is linker peptide. One can recognise a Ricin B-type lectin 1 domain in the interval 292 to 419 (YEPTVRIGGR…YRMRQGWRTG (128 aa)). A 1-alpha repeat occupies 302–344 (DGLCVDVSDNAYNNGNPIILWKCKDQLEVNQLWTLKSDKTIRS). A 1-beta repeat occupies 345 to 385 (KGKCLTTYGYAPGNYVMIYDCSSAVAEATYWDIWDNGTIIN). Asn380 and Asn420 each carry an N-linked (GlcNAc...) asparagine glycan. Residues 388-420 (SGLVLSAESSSMGGTLTVQKNDYRMRQGWRTGN) form a 1-gamma repeat. Positions 422–546 (TSPFVTSIAG…GNANQMWATL (125 aa)) constitute a Ricin B-type lectin 2 domain. One copy of the 2-alpha repeat lies at 433-468 (FKLCMEAHGNSMWLDVCDITKEEQQWAVYPDGSIRP). 2 disulfide bridges follow: Cys436-Cys449 and Cys475-Cys492. The 2-beta repeat unit spans residues 472-511 (TNNCLTCEEHKQGATIVMMGCSNAWASQRWVFKSDGTIYN). The 2-gamma repeat unit spans residues 514-547 (DDMVMDVKSSDPSLKQIILWPYTGNANQMWATLF).

This sequence in the N-terminal section; belongs to the ribosome-inactivating protein family. Type 2 RIP subfamily. Heterotetramer of two A and two B chains.

The enzyme catalyses Endohydrolysis of the N-glycosidic bond at one specific adenosine on the 28S rRNA.. The A chain is responsible for inhibiting protein synthesis through the catalytic inactivation of 60S ribosomal subunits by removing adenine from position 4,324 of 28S rRNA. Less toxic than abrin-a. In terms of biological role, the B chain is a galactose-specific lectin that facilitates the binding to the cell membrane that precedes endocytosis. The protein is Agglutinin-1 of Abrus precatorius (Indian licorice).